The sequence spans 56 residues: Small ribosomal subunit protein uS14 (56 aa).

Residues Cys21, Cys24, Cys39, and Cys42 each coordinate Zn(2+).

It belongs to the universal ribosomal protein uS14 family. Zinc-binding uS14 subfamily. As to quaternary structure, part of the 30S ribosomal subunit. It depends on Zn(2+) as a cofactor.

Binds 16S rRNA, required for the assembly of 30S particles. In Thermococcus kodakarensis (strain ATCC BAA-918 / JCM 12380 / KOD1) (Pyrococcus kodakaraensis (strain KOD1)), this protein is Small ribosomal subunit protein uS14.